A 172-amino-acid chain; its full sequence is Neudesin (172 aa).

An N-terminal signal peptide occupies residues Met-1 to Ala-31. The Cytochrome b5 heme-binding domain maps to Val-44–Phe-129. An N6-acetyllysine modification is found at Lys-136. Residues Asp-151–Phe-172 form a disordered region. Residues Phe-158 to Phe-172 are compositionally biased toward basic and acidic residues.

It belongs to the cytochrome b5 family. MAPR subfamily. In terms of assembly, interacts with PINK1 and PARK7. Ubiquitously expressed with high expression in heart. Over-expressed in various tumors including carcinomas of the uterine cervix, lymphoma, colon, lung, skin and leukemia, as well as carcinoma of the breast.

It localises to the secreted. It is found in the extracellular space. Its subcellular location is the mitochondrion. The protein resides in the endoplasmic reticulum. Functionally, acts as a neurotrophic factor in postnatal mature neurons enhancing neuronal survival. Promotes cell proliferation and neurogenesis in undifferentiated neural progenitor cells at the embryonic stage and inhibits differentiation of astrocytes. Its neurotrophic activity is exerted via MAPK1/ERK2, MAPK3/ERK1 and AKT1/AKT pathways. Neurotrophic activity is enhanced by binding to heme. Also acts as an anorexigenic neurotrophic factor that contributes to energy balance. The chain is Neudesin from Homo sapiens (Human).